The following is a 792-amino-acid chain: LPS-assembly protein LptD (792 aa).

The signal sequence occupies residues 1-22 (MYRVLRLLPLPLSVAISLSALA).

It belongs to the LptD family. In terms of assembly, component of the lipopolysaccharide transport and assembly complex. Interacts with LptE and LptA.

It localises to the cell outer membrane. Together with LptE, is involved in the assembly of lipopolysaccharide (LPS) at the surface of the outer membrane. The sequence is that of LPS-assembly protein LptD from Xylella fastidiosa (strain Temecula1 / ATCC 700964).